The primary structure comprises 52 residues: ATP synthase protein 8 (52 aa).

A helical membrane pass occupies residues 6-26 (PLLWLNLFLMFSATFVMFIVL).

Belongs to the ATPase protein 8 family. In terms of assembly, F-type ATPases have 2 components, CF(1) - the catalytic core - and CF(0) - the membrane proton channel.

The protein localises to the mitochondrion membrane. In terms of biological role, mitochondrial membrane ATP synthase (F(1)F(0) ATP synthase or Complex V) produces ATP from ADP in the presence of a proton gradient across the membrane which is generated by electron transport complexes of the respiratory chain. F-type ATPases consist of two structural domains, F(1) - containing the extramembraneous catalytic core and F(0) - containing the membrane proton channel, linked together by a central stalk and a peripheral stalk. During catalysis, ATP synthesis in the catalytic domain of F(1) is coupled via a rotary mechanism of the central stalk subunits to proton translocation. Part of the complex F(0) domain. Minor subunit located with subunit a in the membrane. The sequence is that of ATP synthase protein 8 (MT-ATP8) from Penaeus monodon (Giant tiger prawn).